The following is a 104-amino-acid chain: Pterin-4-alpha-carbinolamine dehydratase (104 aa).

Alanine 2 is modified (N-acetylalanine). Residues 61–63 and 78–81 contribute to the substrate site; these read DHH and STHE.

Belongs to the pterin-4-alpha-carbinolamine dehydratase family. Homotetramer and homodimer. Heterotetramer with HNF1A; formed by a dimer of dimers. Interacts with HNF1B (via HNF-p1 domain); the interaction increases HNF1B transactivation activity.

It is found in the cytoplasm. Its subcellular location is the nucleus. The enzyme catalyses (4aS,6R)-4a-hydroxy-L-erythro-5,6,7,8-tetrahydrobiopterin = (6R)-L-erythro-6,7-dihydrobiopterin + H2O. Functionally, involved in tetrahydrobiopterin biosynthesis. Seems to both prevent the formation of 7-pterins and accelerate the formation of quinonoid-BH2. Coactivator for HNF1A-dependent transcription. Regulates the dimerization of homeodomain protein HNF1A and enhances its transcriptional activity. Also acts as a coactivator for HNF1B-dependent transcription. The sequence is that of Pterin-4-alpha-carbinolamine dehydratase (PCBD1) from Bos taurus (Bovine).